The following is a 732-amino-acid chain: Elongation factor 2 (732 aa).

The tr-type G domain maps to 19–228 (ELIRNIGIVA…TKITFKDIVE (210 aa)). Residues 28–35 (AHIDHGKT), 94–98 (DTPGH), and 148–151 (NKID) each bind GTP. A Diphthamide modification is found at His598.

This sequence belongs to the TRAFAC class translation factor GTPase superfamily. Classic translation factor GTPase family. EF-G/EF-2 subfamily.

The protein localises to the cytoplasm. Catalyzes the GTP-dependent ribosomal translocation step during translation elongation. During this step, the ribosome changes from the pre-translocational (PRE) to the post-translocational (POST) state as the newly formed A-site-bound peptidyl-tRNA and P-site-bound deacylated tRNA move to the P and E sites, respectively. Catalyzes the coordinated movement of the two tRNA molecules, the mRNA and conformational changes in the ribosome. This is Elongation factor 2 (fusA) from Thermoplasma acidophilum (strain ATCC 25905 / DSM 1728 / JCM 9062 / NBRC 15155 / AMRC-C165).